The primary structure comprises 496 residues: Putative ammonium transporter 1 member 5 (496 aa).

11 helical membrane-spanning segments follow: residues 50 to 70, 85 to 105, 131 to 151, 156 to 176, 202 to 222, 246 to 266, 284 to 306, 314 to 334, 336 to 356, 369 to 389, and 422 to 442; these read LLFS…LCAG, VLDA…FAFG, FFLY…GSIA, FVAY…VVSH, FAGS…GALI, LVVL…PGSF, GIGR…TLFG, WNVT…TAGC, VVDP…LIGC, LEAA…VGLF, and LVQI…LFFI. The residue at position 485 (Ser-485) is a Phosphoserine.

Belongs to the ammonia transporter channel (TC 1.A.11.2) family.

It is found in the membrane. Its function is as follows. Involved in ammonium transport. The polypeptide is Putative ammonium transporter 1 member 5 (AMT1-5) (Arabidopsis thaliana (Mouse-ear cress)).